The chain runs to 218 residues: Copper acquisition factor BIM1 (218 aa).

An N-terminal signal peptide occupies residues 1–19; sequence MFALKSILVTSLITSTALA. Cu(2+) contacts are provided by H20 and H65. N87, N91, and N124 each carry an N-linked (GlcNAc...) asparagine glycan. D138 is a Cu(2+) binding site. N-linked (GlcNAc...) asparagine glycans are attached at residues N158 and N170. The segment at 160–194 is disordered; it reads TCTNDASKASNATSTSSGSATATSAAATSSSSGTS. Residues 165-194 are compositionally biased toward low complexity; sequence ASKASNATSTSSGSATATSAAATSSSSGTS. S190 carries GPI-anchor amidated serine lipidation. The propeptide at 191-218 is removed in mature form; sequence SGTSGAIKEVVGFGALSLALGIAGLIIL.

The protein belongs to the X325 family. In terms of assembly, interacts with the CUF1-dependent copper transporter CTR1. The cofactor is Cu(2+).

Its subcellular location is the cell membrane. In terms of biological role, lytic polysaccharide monooxygenase-like protein that has diverged to biological functions other than polysaccharide degradation since it does not perform oxidative cleavage of polysaccharides. Cell surface-bound protein that functions in the copper-accumulation pathway shared by the CUF1-dependent copper transporter CTR1. Involved in maintaining cell wall integrity during copper deficiency. Binds Cu(2+) with an estimated 1:1 stoichiometry and might serve as an extracellular copper ligand. FRE4 and FRE7 metalloreductases probably function together with CTR1 and BIM1 to liberate the Cu(2+) bound to the BIM1 copper-binding site for subsequent import of Cu(+) into the cell by CTR1, via the reduction of BIM1-bound Cu(2+) to Cu(+) to reduce binding affinity for BIM1 but increase affinity for CTR1. Facilitates copper acquisition in the brain of mammalian hosts and acts as a copper-dependent virulence trait in fungal meningitis. While BIM1 plays a critical role in cryptococcal meningitis, at least in part through its role in copper acquisition, it could play additional roles during copper limitation or as a means to invade and colonize host tissues in the brain, by compromising host carbohydrate integrity via its lytic polysaccharide monooxygenase (LPMO) activity, which has still to be determined. The sequence is that of Copper acquisition factor BIM1 from Cryptococcus neoformans var. grubii serotype A (strain H99 / ATCC 208821 / CBS 10515 / FGSC 9487) (Filobasidiella neoformans var. grubii).